The sequence spans 91 residues: ATP synthase epsilon chain (91 aa).

Belongs to the ATPase epsilon chain family. In terms of assembly, F-type ATPases have 2 components, CF(1) - the catalytic core - and CF(0) - the membrane proton channel. CF(1) has five subunits: alpha(3), beta(3), gamma(1), delta(1), epsilon(1). CF(0) has three main subunits: a, b and c.

It localises to the cell membrane. Its function is as follows. Produces ATP from ADP in the presence of a proton gradient across the membrane. This is ATP synthase epsilon chain (atpC) from Micrococcus luteus (strain ATCC 4698 / DSM 20030 / JCM 1464 / CCM 169 / CCUG 5858 / IAM 1056 / NBRC 3333 / NCIMB 9278 / NCTC 2665 / VKM Ac-2230) (Micrococcus lysodeikticus).